We begin with the raw amino-acid sequence, 258 residues long: Global transcriptional regulator CodY (258 aa).

A GAF domain region spans residues 1–156; the sequence is MSTLLDKTRK…SATIVGLEIL (156 aa). Positions 204–223 form a DNA-binding region, H-T-H motif; sequence ASKIADKVGITRSVIVNALR.

The protein belongs to the CodY family.

It is found in the cytoplasm. In terms of biological role, DNA-binding global transcriptional regulator which is involved in the adaptive response to starvation and acts by directly or indirectly controlling the expression of numerous genes in response to nutrient availability. During rapid exponential growth, CodY is highly active and represses genes whose products allow adaptation to nutrient depletion. This chain is Global transcriptional regulator CodY, found in Clostridium kluyveri (strain NBRC 12016).